We begin with the raw amino-acid sequence, 749 residues long: Protein lin-54 homolog (749 aa).

Residue Lys-139 forms a Glycyl lysine isopeptide (Lys-Gly) (interchain with G-Cter in SUMO2) linkage. Residues Lys-244 and Lys-249 each carry the N6-acetyllysine modification. Phosphoserine is present on residues Ser-264, Ser-282, Ser-310, and Ser-314. Lys-357 is covalently cross-linked (Glycyl lysine isopeptide (Lys-Gly) (interchain with G-Cter in SUMO2)). A CRC domain is found at 521–634; sequence PRKPCNCTKS…KCIGCKNFEE (114 aa). Positions 523 to 536 are DNA-binding; sequence KPCNCTKSLCLKLY. Positions 525, 527, 532, 537, 539, 546, 549, 551, and 554 each coordinate Zn(2+). The linker stretch occupies residues 583 to 596; that stretch reads IGKGKEGESDRRHS. Zn(2+) contacts are provided by Cys-599, Cys-601, Cys-606, Cys-611, Cys-613, Cys-620, Cys-624, Cys-626, and Cys-629. The segment at 599–612 is DNA-binding; sequence CNCKRSGCLKNYCE. The residue at position 635 (Ser-635) is a Phosphoserine. Glycyl lysine isopeptide (Lys-Gly) (interchain with G-Cter in SUMO2) cross-links involve residues Lys-639, Lys-659, and Lys-661.

The protein belongs to the lin-54 family. Component of the DREAM complex (also named LINC complex) at least composed of E2F4, E2F5, LIN9, LIN37, LIN52, LIN54, MYBL1, MYBL2, RBL1, RBL2, RBBP4, RBL2, TFDP1 and TFDP2. The complex exists in quiescent cells where it represses cell cycle-dependent genes. It dissociates in S phase when LIN9, LIN37, LIN52 and LIN54 form a subcomplex that binds to MYBL2.

Its subcellular location is the nucleus. Its function is as follows. Component of the DREAM complex, a multiprotein complex that can both act as a transcription activator or repressor depending on the context. In G0 phase, the complex binds to more than 800 promoters and is required for repression of E2F target genes. In S phase, the complex selectively binds to the promoters of G2/M genes whose products are required for mitosis and participates in their cell cycle dependent activation. In the complex, acts as a DNA-binding protein that binds the promoter of CDK1 in a sequence-specific manner. Specifically recognizes the consensus motif 5'-TTYRAA-3' in target DNA. The chain is Protein lin-54 homolog (Lin54) from Mus musculus (Mouse).